The primary structure comprises 919 residues: Periodic tryptophan protein 2 homolog (919 aa).

5 WD repeats span residues 12-50 (GTVY…SDTL), 53-93 (ATRY…LHHF), 94-132 (HFKG…REFN), 142-181 (GPYD…NLIY), and 186-225 (GHKD…EGLR). Residues 238 to 267 (QREEEEEEEEDQEGDRETTIRGKATPAEEE) form a disordered region. Residues 240 to 251 (EEEEEEEEDQEG) are compositionally biased toward acidic residues. Residues 252 to 267 (DRETTIRGKATPAEEE) are compositionally biased toward basic and acidic residues. WD repeat units follow at residues 286–325 (GDFN…LIHS), 328–368 (ISDQ…YVLK), 371–410 (GHFN…CFVT), 413–452 (EHSS…NFRT), 456–498 (PRPT…DVLS), 499–538 (GHEG…RTKE), 541–580 (ALTS…QTGS), 603–642 (AKGK…LMKR), and 700–740 (KPEI…DPFE). Residues 882–919 (TKRSLDPLGSEEEAEASEDDSLHLLGGGGRDSEEEMLA) are disordered. The span at 890–900 (GSEEEAEASED) shows a compositional bias: acidic residues. Phosphoserine occurs at positions 898 and 902.

This sequence belongs to the WD repeat PWP2 family. In terms of assembly, part of the small subunit (SSU) processome, composed of more than 70 proteins and the RNA chaperone small nucleolar RNA (snoRNA) U3.

The protein localises to the nucleus. It localises to the nucleolus. Part of the small subunit (SSU) processome, first precursor of the small eukaryotic ribosomal subunit. During the assembly of the SSU processome in the nucleolus, many ribosome biogenesis factors, an RNA chaperone and ribosomal proteins associate with the nascent pre-rRNA and work in concert to generate RNA folding, modifications, rearrangements and cleavage as well as targeted degradation of pre-ribosomal RNA by the RNA exosome. The chain is Periodic tryptophan protein 2 homolog from Homo sapiens (Human).